A 400-amino-acid chain; its full sequence is Involucrin (400 aa).

Disordered regions lie at residues 1-196 (MSQQ…HLKQ), 273-312 (KEEVHLEQQQQETQELQQHQGAGILEQKLHQEKAQSEQQL), and 333-381 (KRDE…KGEV). Composition is skewed to low complexity over residues 78 to 159 (QQQQ…QQHQ), 169 to 186 (EQQQQEPQKQELHLGQQE), and 279 to 292 (EQQQQETQELQQHQ). Over residues 333-344 (KRDEQLGKKEEQ) the composition is skewed to basic and acidic residues. Over residues 346-358 (LEPSEQQEGLLEQ) the composition is skewed to low complexity.

The protein belongs to the involucrin family. In terms of assembly, directly or indirectly cross-linked to cornifelin (CNFN). Substrate of transglutaminase. Specific glutamines or lysines are cross-linked to keratins, desmoplakin and to inter involucrin molecules. As to expression, keratinocytes of epidermis and other stratified squamous epithelia.

It localises to the cytoplasm. Its function is as follows. Part of the insoluble cornified cell envelope (CE) of stratified squamous epithelia. In Tupaia glis (Common tree shrew), this protein is Involucrin (IVL).